A 252-amino-acid polypeptide reads, in one-letter code: Type III pantothenate kinase (252 aa).

6 to 13 (DIGNTTTE) provides a ligand contact to ATP. Substrate contacts are provided by residues Tyr-100 and 107-110 (GADR). Asp-109 serves as the catalytic Proton acceptor. Position 129 (Asp-129) interacts with K(+). Thr-132 lines the ATP pocket. Thr-184 lines the substrate pocket.

This sequence belongs to the type III pantothenate kinase family. Homodimer. NH4(+) is required as a cofactor. K(+) serves as cofactor.

The protein localises to the cytoplasm. The enzyme catalyses (R)-pantothenate + ATP = (R)-4'-phosphopantothenate + ADP + H(+). Its pathway is cofactor biosynthesis; coenzyme A biosynthesis; CoA from (R)-pantothenate: step 1/5. In terms of biological role, catalyzes the phosphorylation of pantothenate (Pan), the first step in CoA biosynthesis. The protein is Type III pantothenate kinase of Sulfurihydrogenibium sp. (strain YO3AOP1).